Here is a 1758-residue protein sequence, read N- to C-terminus: Y' element ATP-dependent helicase YIL177C (1758 aa).

Residues 668–845 (EIYMADTPSV…LQRIGLTGLA (178 aa)) form the Helicase ATP-binding domain. Residue 681–688 (APPGYGKT) participates in ATP binding. The 152-residue stretch at 900 to 1051 (ALKLLLALFE…EFYGLESKKG (152 aa)) folds into the Helicase C-terminal domain. The segment covering 1142 to 1360 (NVRTNATTNA…ATTTESTNAS (219 aa)) has biased composition (low complexity). A disordered region spans residues 1142–1384 (NVRTNATTNA…RFHPVTDINK (243 aa)). Positions 1361–1384 (AKEDANKDGNAEDNRFHPVTDINK) are enriched in basic and acidic residues.

This sequence belongs to the helicase family. Yeast subtelomeric Y' repeat subfamily.

Catalyzes DNA unwinding and is involved in telomerase-independent telomere maintenance. This Saccharomyces cerevisiae (strain ATCC 204508 / S288c) (Baker's yeast) protein is Y' element ATP-dependent helicase YIL177C.